We begin with the raw amino-acid sequence, 121 residues long: uncharacterized protein (121 aa).

Disordered regions lie at residues 1–41 (MRRQ…QESR) and 94–121 (GGTI…GLRR). The span at 98 to 108 (SGQQSRNSSLP) shows a compositional bias: polar residues.

Predominantly expressed in tissues containing motile cilia. Also expressed in non-motile ciliated adult olfactory bulbs.

It is found in the cytoplasm. Its subcellular location is the cytoskeleton. It localises to the cilium basal body. This is an uncharacterized protein from Mus musculus (Mouse).